Reading from the N-terminus, the 80-residue chain is MAFLKKSLFLVLFLGIVSLSICEEEKREGEEEEKQEEENEELSEEELRERRAWLDKLKSLGKVVGKVALGVAQNYLNPQQ.

The first 22 residues, 1-22 (MAFLKKSLFLVLFLGIVSLSIC), serve as a signal peptide directing secretion. Positions 23–49 (EEEKREGEEEEKQEEENEELSEEELRE) are excised as a propeptide.

This sequence belongs to the frog skin active peptide (FSAP) family. Dermaseptin subfamily. In terms of tissue distribution, expressed by the skin glands.

It localises to the secreted. Has antibacterial activity against the Gram-negative bacteria E.coli ATCC 25922 (MIC=5 uM), P.aeruginosa ATCC 27853 (MIC=10 uM) and X.citri (MIC&lt; 2 uM), and the Gram-positive bacterium S.aureus ATCC 29313 (MIC=20 uM). Does not have hemolytic activity against human erythrocytes. The polypeptide is Raniseptin-1 (Boana raniceps (Chaco tree frog)).